Reading from the N-terminus, the 1008-residue chain is RNA cytidine acetyltransferase (1008 aa).

ATP is bound by residues 282-291 (GRGKSAALGL) and R443. The 183-residue stretch at 531 to 713 (CLLGPVQRMD…VPVYLSQKSN (183 aa)) folds into the N-acetyltransferase domain. Residues 601–603 (VAT), 608–614 (QRMGYGK), and N700 each bind acetyl-CoA. S907 is modified (phosphoserine). Residues 950–1008 (ALETNGTGGGSGLLSVKSGVKRLDGPIETREDGDLAAPLSKKKKKNNPKQRRSQGKSLI) are disordered. The span at 970 to 982 (KRLDGPIETREDG) shows a compositional bias: basic and acidic residues. The segment covering 989 to 1008 (SKKKKKNNPKQRRSQGKSLI) has biased composition (basic residues).

The protein belongs to the RNA cytidine acetyltransferase family. NAT10 subfamily. As to quaternary structure, component of the PRC1 complex (PSC, PC, PH and dRING1) in 0-12 hours Drosophila embryos. This complex is distinct from the Esc/E(z) complex, which contains many other PcG proteins like Esc, E(z), Su(z)12, HDAC1/Rpd3, Caf1-55 and probably Pho. The two complexes however cooperate and interact together during the first 3 hours of development to establish PcG silencing. Part of the small subunit (SSU) processome, composed of more than 70 proteins and the RNA chaperone small nucleolar RNA (snoRNA) U3.

The protein localises to the nucleus. The protein resides in the nucleolus. The enzyme catalyses a cytidine in 18S rRNA + acetyl-CoA + ATP + H2O = an N(4)-acetylcytidine in 18S rRNA + ADP + phosphate + CoA + H(+). The catalysed reaction is a cytidine in tRNA + acetyl-CoA + ATP + H2O = an N(4)-acetylcytidine in tRNA + ADP + phosphate + CoA + H(+). Functionally, RNA cytidine acetyltransferase with specificity toward both 18S rRNA and tRNAs. Catalyzes the formation of N(4)-acetylcytidine (ac4C) in 18S rRNA. Required for early nucleolar cleavages of precursor rRNA at sites A0, A1 and A2 during 18S rRNA synthesis. Catalyzes the formation of ac4C in serine and leucine tRNAs. Requires a tRNA-binding adapter protein for full tRNA acetyltransferase activity but not for 18S rRNA acetylation. Polycomb group (PcG) protein. PcG proteins act by forming multiprotein complexes, which are required to maintain the transcriptionally repressive state of homeotic genes throughout development. PcG proteins are not required to initiate repression, but to maintain it during later stages of development. They probably act via the methylation of histones, rendering chromatin heritably changed in its expressibility. Part of the small subunit (SSU) processome, first precursor of the small eukaryotic ribosomal subunit. During the assembly of the SSU processome in the nucleolus, many ribosome biogenesis factors, an RNA chaperone and ribosomal proteins associate with the nascent pre-rRNA and work in concert to generate RNA folding, modifications, rearrangements and cleavage as well as targeted degradation of pre-ribosomal RNA by the RNA exosome. The sequence is that of RNA cytidine acetyltransferase (l(1)G0020) from Drosophila melanogaster (Fruit fly).